A 202-amino-acid chain; its full sequence is Sterile alpha motif domain-containing protein 10 (202 aa).

The region spanning 118 to 184 is the SAM domain; it reads WSQQDVCKWL…LQQVLRLQVR (67 aa).

The sequence is that of Sterile alpha motif domain-containing protein 10 (SAMD10) from Homo sapiens (Human).